An 87-amino-acid polypeptide reads, in one-letter code: MVYLLCFFLVADVSYGINKDCLLPKVVGFCRARFPRYYYNSSSRRCEKFNYGGCGGNANNFSSYYECHIKCFGPRAIIFPEDSPKEN.

The first 16 residues, 1 to 16 (MVYLLCFFLVADVSYG), serve as a signal peptide directing secretion. The region spanning 21 to 71 (CLLPKVVGFCRARFPRYYYNSSSRRCEKFNYGGCGGNANNFSSYYECHIKC) is the BPTI/Kunitz inhibitor domain. 3 disulfides stabilise this stretch: Cys-21/Cys-71, Cys-30/Cys-54, and Cys-46/Cys-67.

Belongs to the venom Kunitz-type family. Sea anemone type 2 potassium channel toxin subfamily.

The protein localises to the secreted. It localises to the nematocyst. Serine protease inhibitor that inhibits both tissue and plasma kallikreins. Has hemolytic activity. Inhibits voltage-gated potassium channels (Kv). This chain is U-actitoxin-Avd3o, found in Anemonia viridis (Snakelocks anemone).